A 190-amino-acid chain; its full sequence is ATP synthase subunit b, chloroplastic (190 aa).

A helical transmembrane segment spans residues 35–55; sequence LSVVLGVLIFFGKGVCASCLL.

Belongs to the ATPase B chain family. In terms of assembly, F-type ATPases have 2 components, F(1) - the catalytic core - and F(0) - the membrane proton channel. F(1) has five subunits: alpha(3), beta(3), gamma(1), delta(1), epsilon(1). F(0) has four main subunits: a(1), b(1), b'(1) and c(10-14). The alpha and beta chains form an alternating ring which encloses part of the gamma chain. F(1) is attached to F(0) by a central stalk formed by the gamma and epsilon chains, while a peripheral stalk is formed by the delta, b and b' chains.

The protein localises to the plastid. Its subcellular location is the chloroplast thylakoid membrane. Its function is as follows. F(1)F(0) ATP synthase produces ATP from ADP in the presence of a proton or sodium gradient. F-type ATPases consist of two structural domains, F(1) containing the extramembraneous catalytic core and F(0) containing the membrane proton channel, linked together by a central stalk and a peripheral stalk. During catalysis, ATP synthesis in the catalytic domain of F(1) is coupled via a rotary mechanism of the central stalk subunits to proton translocation. In terms of biological role, component of the F(0) channel, it forms part of the peripheral stalk, linking F(1) to F(0). This is ATP synthase subunit b, chloroplastic from Coffea arabica (Arabian coffee).